A 239-amino-acid polypeptide reads, in one-letter code: Lactate utilization protein A 2 (239 aa).

It belongs to the LutA/YkgE family.

Functionally, is involved in L-lactate degradation and allows cells to grow with lactate as the sole carbon source. This Bacillus mycoides (strain KBAB4) (Bacillus weihenstephanensis) protein is Lactate utilization protein A 2.